We begin with the raw amino-acid sequence, 196 residues long: Imidazoleglycerol-phosphate dehydratase (196 aa).

The protein belongs to the imidazoleglycerol-phosphate dehydratase family.

It localises to the cytoplasm. The catalysed reaction is D-erythro-1-(imidazol-4-yl)glycerol 3-phosphate = 3-(imidazol-4-yl)-2-oxopropyl phosphate + H2O. It participates in amino-acid biosynthesis; L-histidine biosynthesis; L-histidine from 5-phospho-alpha-D-ribose 1-diphosphate: step 6/9. The sequence is that of Imidazoleglycerol-phosphate dehydratase from Granulibacter bethesdensis (strain ATCC BAA-1260 / CGDNIH1).